The chain runs to 317 residues: Melanocyte-stimulating hormone receptor (317 aa).

The Extracellular segment spans residues 1–37; the sequence is MPIHGAPRKLLGSLNSTPTATPKLGLAANHTGAPCLE. N-linked (GlcNAc...) asparagine glycosylation occurs at Asn29. A helical membrane pass occupies residues 38-63; sequence VSIPDGLFLSLGLVSLVENVLVVAAI. Over 64-72 the chain is Cytoplasmic; it reads AKNRNLHSP. The chain crosses the membrane as a helical span at residues 73 to 93; the sequence is MYCFICCLALSDLLVSGSNML. At 94 to 118 the chain is on the extracellular side; that stretch reads EMAVVLLLEGGALATRASVVQQLHN. A helical transmembrane segment spans residues 119–140; the sequence is TIDVLTCSSMLCSLCFLGAIAV. Topologically, residues 141–163 are cytoplasmic; that stretch reads DRHISIFYALRYHSIMTLPRAQR. The helical transmembrane segment at 164 to 183 threads the bilayer; the sequence is VIAAIWVASILSSTLFITYY. At 184 to 191 the chain is on the extracellular side; it reads DHAAVLLC. A helical transmembrane segment spans residues 192–211; it reads LVVFFLAMLVLMAVLYVHML. Residues 212–240 are Cytoplasmic-facing; that stretch reads ARACQHAQGITRLHKRQPPAHQGFGLRGA. The chain crosses the membrane as a helical span at residues 241–266; it reads ATLTILLGIFFLCWGPFFLHLKLVVF. The Extracellular portion of the chain corresponds to 267–279; it reads CPQHLTCSCIFKN. A helical transmembrane segment spans residues 280 to 300; that stretch reads FKVFLTLIICNTIIDPLIYAF. Topologically, residues 301-317 are cytoplasmic; sequence RSQELRRTLKEVLLCSW. Residue Cys315 is the site of S-palmitoyl cysteine attachment.

It belongs to the G-protein coupled receptor 1 family. In terms of assembly, interacts with MGRN1, but does not undergo MGRN1-mediated ubiquitination; this interaction competes with GNAS-binding and thus inhibits agonist-induced cAMP production. Interacts with OPN3; the interaction results in a decrease in MC1R-mediated cAMP signaling and ultimately a decrease in melanin production in melanocytes.

It localises to the cell membrane. Functionally, receptor for MSH (alpha, beta and gamma) and ACTH. The activity of this receptor is mediated by G proteins which activate adenylate cyclase. Mediates melanogenesis, the production of eumelanin (black/brown) and phaeomelanin (red/yellow), via regulation of cAMP signaling in melanocytes. The polypeptide is Melanocyte-stimulating hormone receptor (MC1R) (Saimiri oerstedii (Central American squirrel monkey)).